A 156-amino-acid chain; its full sequence is Deoxyuridine 5'-triphosphate nucleotidohydrolase (156 aa).

Substrate is bound by residues 76-78 (RSG), asparagine 89, 93-95 (TVD), and lysine 103.

It belongs to the dUTPase family. It depends on Mg(2+) as a cofactor.

The catalysed reaction is dUTP + H2O = dUMP + diphosphate + H(+). It participates in pyrimidine metabolism; dUMP biosynthesis; dUMP from dCTP (dUTP route): step 2/2. In terms of biological role, this enzyme is involved in nucleotide metabolism: it produces dUMP, the immediate precursor of thymidine nucleotides and it decreases the intracellular concentration of dUTP so that uracil cannot be incorporated into DNA. The sequence is that of Deoxyuridine 5'-triphosphate nucleotidohydrolase from Rhizobium etli (strain CIAT 652).